The following is a 562-amino-acid chain: Cytosolic invertase 1 (562 aa).

Belongs to the glycosyl hydrolase 100 family.

It is found in the cytoplasm. Its subcellular location is the cytosol. It carries out the reaction Hydrolysis of terminal non-reducing beta-D-fructofuranoside residues in beta-D-fructofuranosides.. Functionally, cytosolic invertase that cleaves sucrose into glucose and fructose and is involved in the regulation of primary root elongation, lateral root formation, floral transition and pollen development. The chain is Cytosolic invertase 1 from Oryza sativa subsp. japonica (Rice).